The following is a 336-amino-acid chain: ATP-dependent 6-phosphofructokinase 3 (336 aa).

Residues G10, 72-73 (RE), and 108-111 (GNGT) contribute to the ATP site. Position 109 (N109) interacts with Mg(2+). Residues 131–133 (TID), R168, 175–177 (MGH), E228, R255, and 261–264 (YIQR) each bind substrate. D133 functions as the Proton acceptor in the catalytic mechanism.

It belongs to the phosphofructokinase type A (PFKA) family. Mixed-substrate PFK group III subfamily. In terms of assembly, homodimer or homotetramer. The cofactor is Mg(2+).

Its subcellular location is the cytoplasm. The catalysed reaction is beta-D-fructose 6-phosphate + ATP = beta-D-fructose 1,6-bisphosphate + ADP + H(+). It participates in carbohydrate degradation; glycolysis; D-glyceraldehyde 3-phosphate and glycerone phosphate from D-glucose: step 3/4. In terms of biological role, catalyzes the phosphorylation of D-fructose 6-phosphate to fructose 1,6-bisphosphate by ATP, the first committing step of glycolysis. The chain is ATP-dependent 6-phosphofructokinase 3 from Bacteroides thetaiotaomicron (strain ATCC 29148 / DSM 2079 / JCM 5827 / CCUG 10774 / NCTC 10582 / VPI-5482 / E50).